Reading from the N-terminus, the 505-residue chain is Protein DETOXIFICATION 50 (505 aa).

A run of 12 helical transmembrane segments spans residues 46–66 (LVLTGLFLYVRSFVSLSFLGG), 78–98 (AAAFANITGYSLFSGLTMGVE), 121–141 (IILLLVTSLPVTLLWMNMEKI), 155–175 (AHIFLLYSVPDLVAQSFLHPL), 194–214 (IASFLHLPITFFLVSYLGLGI), 219–239 (LSGVVSNFNLVAFLFLYICFF), 275–295 (ISVCLEWWCYEIMILLCGFLL), 305–325 (GILIQITSLVYIFPHSLSLGV), 344–364 (AAIVGLGLSIALGFTAFAFTV), 380–400 (IMKLTAMALPIVGLCELGNCP), 424–444 (AFYAVGIPVGAVLAFWFGFGF), and 446–466 (GLWLGMLAAQITCVIGMMAAT).

This sequence belongs to the multi antimicrobial extrusion (MATE) (TC 2.A.66.1) family. Preferentially expressed in rosette leaves. Detected mainly in the vascular tissues and guard cells. Mostly detected at reproductive stages in young anthers, in mature pollens and during pollen germination on the pistil. Also expressed in developing seeds.

It is found in the cell membrane. The protein resides in the late endosome membrane. In terms of biological role, functions as a multidrug and toxin extrusion transporter in the export of abscisic acid (ABA) in guard cells. Plays a role in ABA-mediated growth inhibition and responses to drought conditions. May act as a negative regulator of hypocotyl cell elongation in the light. This is Protein DETOXIFICATION 50 from Arabidopsis thaliana (Mouse-ear cress).